Here is a 156-residue protein sequence, read N- to C-terminus: ATP synthase subunit b (156 aa).

The chain crosses the membrane as a helical span at residues 3-23 (ITFTIFAQSLAFAALIWIVAT).

The protein belongs to the ATPase B chain family. F-type ATPases have 2 components, F(1) - the catalytic core - and F(0) - the membrane proton channel. F(1) has five subunits: alpha(3), beta(3), gamma(1), delta(1), epsilon(1). F(0) has three main subunits: a(1), b(2) and c(10-14). The alpha and beta chains form an alternating ring which encloses part of the gamma chain. F(1) is attached to F(0) by a central stalk formed by the gamma and epsilon chains, while a peripheral stalk is formed by the delta and b chains.

The protein resides in the cell inner membrane. Functionally, f(1)F(0) ATP synthase produces ATP from ADP in the presence of a proton or sodium gradient. F-type ATPases consist of two structural domains, F(1) containing the extramembraneous catalytic core and F(0) containing the membrane proton channel, linked together by a central stalk and a peripheral stalk. During catalysis, ATP synthesis in the catalytic domain of F(1) is coupled via a rotary mechanism of the central stalk subunits to proton translocation. Component of the F(0) channel, it forms part of the peripheral stalk, linking F(1) to F(0). The protein is ATP synthase subunit b of Xylella fastidiosa (strain M23).